Consider the following 377-residue polypeptide: DNA replication and repair protein RecF (377 aa).

30-37 (GPNGVGKT) contacts ATP.

Belongs to the RecF family.

The protein localises to the cytoplasm. In terms of biological role, the RecF protein is involved in DNA metabolism; it is required for DNA replication and normal SOS inducibility. RecF binds preferentially to single-stranded, linear DNA. It also seems to bind ATP. The polypeptide is DNA replication and repair protein RecF (Salinispora tropica (strain ATCC BAA-916 / DSM 44818 / JCM 13857 / NBRC 105044 / CNB-440)).